The sequence spans 579 residues: Probable N-acetylgalactosaminyltransferase 9 (579 aa).

At 1–12 (MLRYIIPRKKGT) the chain is on the cytoplasmic side. The helical; Signal-anchor for type II membrane protein transmembrane segment at 13-30 (FVIAAFLTVAFFCIVAYH) threads the bilayer. Residues 31-579 (RNDRRRTKFQ…KWNFIDPAKA (549 aa)) are Lumenal-facing. The N-linked (GlcNAc...) asparagine glycan is linked to N67. 5 disulfide bridges follow: C123-C356, C347-C427, C464-C483, C507-C520, and C545-C562. A catalytic subdomain A region spans residues 133–243 (LPKTSVIIIF…HGWLEPIVQR (111 aa)). Residues D174 and R204 each contribute to the substrate site. D227 is a binding site for Mn(2+). S228 is a binding site for substrate. Mn(2+) is bound at residue H229. The interval 302 to 364 (YIRSPTMAGG…PCSHVGHIFR (63 aa)) is catalytic subdomain B. Substrate is bound at residue W333. H361 lines the Mn(2+) pocket. Residues R364, H367, and Y369 each coordinate substrate. N370 is a glycosylation site (N-linked (GlcNAc...) asparagine). The 125-residue stretch at 450 to 574 (AYGALHTVVS…KDEHQKWNFI (125 aa)) folds into the Ricin B-type lectin domain.

Belongs to the glycosyltransferase 2 family. GalNAc-T subfamily. Requires Mn(2+) as cofactor.

Its subcellular location is the golgi apparatus membrane. It functions in the pathway protein modification; protein glycosylation. Its function is as follows. Probable glycopeptide transferase involved in O-linked oligosaccharide biosynthesis. Glycopeptide transferases catalyze the transfer of an N-acetyl-D-galactosamine residue to an already glycosylated peptide. In contrast to other members of the family, it does not act as a peptide transferase that transfers GalNAc onto serine or threonine residue on peptides that have been tested. Some peptide transferase activity is however not excluded, considering that its appropriate peptide substrate may remain unidentified. The polypeptide is Probable N-acetylgalactosaminyltransferase 9 (gly-9) (Caenorhabditis elegans).